A 242-amino-acid chain; its full sequence is Succinyl-CoA:3-ketoacid coenzyme A transferase subunit A (242 aa).

33–39 (GGFGLCG) lines the CoA pocket.

The protein belongs to the 3-oxoacid CoA-transferase subunit A family. In terms of assembly, heterodimer of a subunit A and a subunit B.

It carries out the reaction a 3-oxo acid + succinyl-CoA = a 3-oxoacyl-CoA + succinate. It functions in the pathway bacterial outer membrane biogenesis; lipopolysaccharide biosynthesis. This is Succinyl-CoA:3-ketoacid coenzyme A transferase subunit A (lpsI) from Xanthomonas campestris pv. campestris (strain B100).